The sequence spans 352 residues: MTIAVGRAPAARGWFDILDDWLKRDRFVFVGWSGLLLFPTAYLALGGWLTGTTFVTSWYTHGIASSYLEGCNFLTAAVSTPADAMGHSLLLLWGPEAQGDFVRWCQLGGLWAFVALHGAFALIGFMLRQFEIARLVGIRPYNAIAFSGPIAVFVSVFLIYPLGQSSWFFAPSFGVAAIFRFLLFLQGFHNWTLNPFHMMGVAGILGGALLCAIHGATVENTLFEDGEQANTFKAFEPTQEEETYSMVTANRFWSQIFGIAFSNKRWLHFFMLFVPVMGLWTSSIGIIGLALNLRAYDFVSQEIRAAEDPEFETFYTKNILLNEGLRAWMAPADQPHENFVFPEEVLPRGNAL.

A helical membrane pass occupies residues 40–60 (TAYLALGGWLTGTTFVTSWYT). Histidine 117 contacts chlorophyll a. The chain crosses the membrane as a helical span at residues 124–140 (GFMLRQFEIARLVGIRP). 2 residues coordinate pheophytin a: glutamine 129 and asparagine 142. The chain crosses the membrane as a helical span at residues 152 to 165 (VFVSVFLIYPLGQS). Residue histidine 197 coordinates chlorophyll a. A helical membrane pass occupies residues 207-227 (GALLCAIHGATVENTLFEDGE). A plastoquinone is bound by residues histidine 214 and phenylalanine 261. Histidine 214 serves as a coordination point for Fe cation. Histidine 268 is a Fe cation binding site. Residues 278–294 (GLWTSSIGIIGLALNLR) form a helical membrane-spanning segment.

The protein belongs to the reaction center PufL/M/PsbA/D family. PSII is composed of 1 copy each of membrane proteins PsbA, PsbB, PsbC, PsbD, PsbE, PsbF, PsbH, PsbI, PsbJ, PsbK, PsbL, PsbM, PsbT, PsbX, PsbY, PsbZ, Psb30/Ycf12, at least 3 peripheral proteins of the oxygen-evolving complex and a large number of cofactors. It forms dimeric complexes. It depends on The D1/D2 heterodimer binds P680, chlorophylls that are the primary electron donor of PSII, and subsequent electron acceptors. It shares a non-heme iron and each subunit binds pheophytin, quinone, additional chlorophylls, carotenoids and lipids. There is also a Cl(-1) ion associated with D1 and D2, which is required for oxygen evolution. The PSII complex binds additional chlorophylls, carotenoids and specific lipids. as a cofactor.

It localises to the plastid. The protein resides in the organellar chromatophore thylakoid membrane. The enzyme catalyses 2 a plastoquinone + 4 hnu + 2 H2O = 2 a plastoquinol + O2. In terms of biological role, photosystem II (PSII) is a light-driven water:plastoquinone oxidoreductase that uses light energy to abstract electrons from H(2)O, generating O(2) and a proton gradient subsequently used for ATP formation. It consists of a core antenna complex that captures photons, and an electron transfer chain that converts photonic excitation into a charge separation. The D1/D2 (PsbA/PsbD) reaction center heterodimer binds P680, the primary electron donor of PSII as well as several subsequent electron acceptors. D2 is needed for assembly of a stable PSII complex. The sequence is that of Photosystem II D2 protein from Paulinella chromatophora.